Here is a 158-residue protein sequence, read N- to C-terminus: UPF0178 protein RPA2191 (158 aa).

This sequence belongs to the UPF0178 family.

This chain is UPF0178 protein RPA2191, found in Rhodopseudomonas palustris (strain ATCC BAA-98 / CGA009).